The sequence spans 373 residues: Alanine racemase (373 aa).

K37 acts as the Proton acceptor; specific for D-alanine in catalysis. Residue K37 is modified to N6-(pyridoxal phosphate)lysine. Position 135 (R135) interacts with substrate. Y266 functions as the Proton acceptor; specific for L-alanine in the catalytic mechanism. Position 313 (M313) interacts with substrate.

This sequence belongs to the alanine racemase family. Pyridoxal 5'-phosphate serves as cofactor.

The catalysed reaction is L-alanine = D-alanine. It functions in the pathway amino-acid biosynthesis; D-alanine biosynthesis; D-alanine from L-alanine: step 1/1. Functionally, catalyzes the interconversion of L-alanine and D-alanine. This organism is able to use both L- and D-alanine as a nitrogen source. May also prevent D-alanine from interfering with the use of L-alanine. This is Alanine racemase (alr) from Methanococcus maripaludis (strain DSM 14266 / JCM 13030 / NBRC 101832 / S2 / LL).